We begin with the raw amino-acid sequence, 81 residues long: Three-finger toxin A1 (81 aa).

An N-terminal signal peptide occupies residues 1–21; that stretch reads MKTLLLTLVVVTIVCLDFGHT. 4 disulfides stabilise this stretch: Cys-24–Cys-43, Cys-38–Cys-60, Cys-62–Cys-73, and Cys-74–Cys-79.

This sequence belongs to the three-finger toxin family. Short-chain subfamily. Type I alpha-neurotoxin sub-subfamily. Expressed by the venom gland.

It is found in the secreted. Functionally, binds and inhibits fetal (alpha-1-beta-1-gamma-delta/CHRNA1-CHRNB1-CHRNG-CHRND, IC(50)=1.4 nM), adult (alpha-1-beta-1-delta-epsilon/CHRNA1-CHRNB1-CHRND-CHRNE, IC(50)=12 nM) and neuronal alpha-7/CHRNA7 (IC(50)=400 nM) nicotinic acetylcholine receptors (nAChR) thereby impairing neuromuscular and neuronal transmissions. In Micrurus laticollaris (Balsas coral snake), this protein is Three-finger toxin A1.